Here is a 495-residue protein sequence, read N- to C-terminus: Sugar phosphate exchanger 3 (495 aa).

Residues 16–36 (FSHHHMVVFLLTFFSYSLLHA) form a helical membrane-spanning segment. N-linked (GlcNAc...) asparagine glycosylation occurs at Asn58. The next 5 membrane-spanning stretches (helical) occupy residues 82–102 (TLFL…GLFI), 114–134 (WVLS…GTLT), 148–168 (LWIV…AVMG), 178–198 (VVFG…ACLA), and 210–230 (FLVT…GLLV). N-linked (GlcNAc...) asparagine glycosylation occurs at Asn267. The next 6 helical transmembrane spans lie at 298–318 (LAYA…PFYL), 334–354 (IWYD…SDML), 358–378 (APVL…YSRS), 387–407 (LLMA…SSAI), 429–449 (GIVD…VSLI), and 453–473 (LGWM…VLFI).

The protein belongs to the major facilitator superfamily. Organophosphate:Pi antiporter (OPA) (TC 2.A.1.4) family. In terms of assembly, interacts with ATRAID; the interaction is direct and both proteins are mutually dependent for their stability. In terms of processing, glycosylated.

It is found in the endoplasmic reticulum membrane. The protein localises to the lysosome membrane. Functionally, unlike the other SLC37 members, lacks glucose-6-phosphate antiporter activity. In osteoclasts, forms a transporter complex with ATRAID for nitrogen-containing-bisphophonates (N-BPs) required for releasing N-BP molecules that have trafficked to lysosomes through fluid-phase endocytosis into the cytosol. The sequence is that of Sugar phosphate exchanger 3 (SLC37A3) from Bos taurus (Bovine).